The following is an 828-amino-acid chain: Periplasmic nitrate reductase (828 aa).

Positions 1–31 form a signal peptide, tat-type signal; the sequence is MKLSRRSFMKANAVAAAAAAAGLSVPGVARA. In terms of domain architecture, 4Fe-4S Mo/W bis-MGD-type spans 39–95; that stretch reads IKWDKAPCRFCGTGCGVLVGTQQGRVVACQGDPDAPVNRGLNCIKGYFLPKIMYGKD. Residues Cys-46, Cys-49, Cys-53, and Cys-81 each coordinate [4Fe-4S] cluster. Mo-bis(molybdopterin guanine dinucleotide) is bound by residues Lys-83, Gln-150, Asn-175, Cys-179, 212–219, 243–247, 262–264, Met-372, Gln-376, Asn-482, 508–509, Lys-531, Asp-558, and 718–727; these read WGSNMAEM, STFQH, QSD, SD, and TGRVLEHWHT. Substrate is bound at residue Phe-794. Residues Asn-802 and Lys-819 each coordinate Mo-bis(molybdopterin guanine dinucleotide).

The protein belongs to the prokaryotic molybdopterin-containing oxidoreductase family. NasA/NapA/NarB subfamily. As to quaternary structure, component of the periplasmic nitrate reductase NapAB complex composed of NapA and NapB. [4Fe-4S] cluster serves as cofactor. Mo-bis(molybdopterin guanine dinucleotide) is required as a cofactor. Predicted to be exported by the Tat system. The position of the signal peptide cleavage has not been experimentally proven.

The protein resides in the periplasm. The enzyme catalyses 2 Fe(II)-[cytochrome] + nitrate + 2 H(+) = 2 Fe(III)-[cytochrome] + nitrite + H2O. Its function is as follows. Catalytic subunit of the periplasmic nitrate reductase complex NapAB. Receives electrons from NapB and catalyzes the reduction of nitrate to nitrite. This chain is Periplasmic nitrate reductase, found in Salmonella paratyphi A (strain ATCC 9150 / SARB42).